The sequence spans 713 residues: Segment polarity protein dishevelled homolog DVL-3 (713 aa).

The DIX domain occupies 1–82 (MGETKVIYHL…RVVCWLVSAD (82 aa)). 2 stretches are compositionally biased toward polar residues: residues 87-98 (DAGSVCADNQSD) and 118-127 (HPNTRGSQEN). Residues 87-235 (DAGSVCADNQ…PRIERSSSFS (149 aa)) are disordered. Residues 140 to 155 (AHRERPRRKETPEHAT) are compositionally biased toward basic and acidic residues. Residues 173 to 189 (ESSSTLMSSELDSTSFF) show a composition bias toward low complexity. Positions 199–210 (RFSNSTEQSSAS) are enriched in polar residues. Positions 212–225 (LMRRHKRRRRKPKA) are enriched in basic residues. Residues 248-333 (TVTLNMEKYN…KPGPITLTVA (86 aa)) enclose the PDZ domain. One can recognise a DEP domain in the interval 421–495 (PESGLEVRDR…SEQCYYIFGD (75 aa)). The segment covering 508 to 518 (HDGSSGTSDQD) has biased composition (polar residues). Disordered regions lie at residues 508-527 (HDGS…PHPG) and 545-652 (YSPH…GPPG). The segment covering 564–579 (GSQHSEGSRSSGSNRS) has biased composition (low complexity). Composition is skewed to basic and acidic residues over residues 580–593 (STEK…KGGD) and 602–618 (ESDH…RAAS). Over residues 629–646 (HRSHHSIAHSIRSHHTHH) the composition is skewed to basic residues.

Belongs to the DSH family.

It localises to the cytoplasm. In terms of biological role, involved in the signal transduction pathway mediated by multiple Wnt genes. Required during ciliogenesis for the docking of basal bodies to the apical plasma membrane. In Xenopus tropicalis (Western clawed frog), this protein is Segment polarity protein dishevelled homolog DVL-3.